We begin with the raw amino-acid sequence, 532 residues long: uncharacterized protein (532 aa).

5 helical membrane-spanning segments follow: residues 11-31 (YLSH…ALII), 51-71 (IEPF…KIFF), 126-146 (LIDI…YTLW), 147-167 (ILYN…IIVF), and 231-253 (YVES…VLLI). The region spanning 315-531 (ICINKLVYEY…MIIPMNNGII (217 aa)) is the ABC transporter domain. 349-356 (GKSGSGKS) contributes to the ATP binding site.

It localises to the membrane. This is an uncharacterized protein from Acanthamoeba polyphaga mimivirus (APMV).